The sequence spans 597 residues: Formate--tetrahydrofolate ligase (597 aa).

Position 84–91 (84–91 (TPLGEGKS)) interacts with ATP.

It belongs to the formate--tetrahydrofolate ligase family.

The catalysed reaction is (6S)-5,6,7,8-tetrahydrofolate + formate + ATP = (6R)-10-formyltetrahydrofolate + ADP + phosphate. It participates in one-carbon metabolism; tetrahydrofolate interconversion. The polypeptide is Formate--tetrahydrofolate ligase (Dehalococcoides mccartyi (strain CBDB1)).